Here is a 123-residue protein sequence, read N- to C-terminus: Large ribosomal subunit protein bL12 (123 aa).

Belongs to the bacterial ribosomal protein bL12 family. In terms of assembly, homodimer. Part of the ribosomal stalk of the 50S ribosomal subunit. Forms a multimeric L10(L12)X complex, where L10 forms an elongated spine to which 2 to 4 L12 dimers bind in a sequential fashion. Binds GTP-bound translation factors.

Its function is as follows. Forms part of the ribosomal stalk which helps the ribosome interact with GTP-bound translation factors. Is thus essential for accurate translation. This chain is Large ribosomal subunit protein bL12, found in Salmonella arizonae (strain ATCC BAA-731 / CDC346-86 / RSK2980).